The following is a 297-amino-acid chain: Acetylglutamate kinase (297 aa).

Substrate contacts are provided by residues 73 to 74, Arg-95, and Asn-188; that span reads GG.

This sequence belongs to the acetylglutamate kinase family. ArgB subfamily.

It localises to the cytoplasm. It carries out the reaction N-acetyl-L-glutamate + ATP = N-acetyl-L-glutamyl 5-phosphate + ADP. It participates in amino-acid biosynthesis; L-arginine biosynthesis; N(2)-acetyl-L-ornithine from L-glutamate: step 2/4. Its function is as follows. Catalyzes the ATP-dependent phosphorylation of N-acetyl-L-glutamate. The sequence is that of Acetylglutamate kinase from Trichormus variabilis (strain ATCC 29413 / PCC 7937) (Anabaena variabilis).